A 171-amino-acid chain; its full sequence is MPLLDSFTVDHTIMKAPAVRVAKTMKTPHGDEITVFDLRFCVPNKEVMPERGIHTLEHLFAGFMRNHLNGNGVEIIDISPMGCRTGFYMSLIGTPDEQRVADAWKAAMADVLKVTDQRKIPELNEYQCGTYHMHSLEEAQEIAKGIIDRGVRINHNEELALPKEKLTELHI.

H54, H58, and C128 together coordinate Fe cation.

It belongs to the LuxS family. Homodimer. Requires Fe cation as cofactor.

It catalyses the reaction S-(5-deoxy-D-ribos-5-yl)-L-homocysteine = (S)-4,5-dihydroxypentane-2,3-dione + L-homocysteine. In terms of biological role, involved in the synthesis of autoinducer 2 (AI-2) which is secreted by bacteria and is used to communicate both the cell density and the metabolic potential of the environment. The regulation of gene expression in response to changes in cell density is called quorum sensing. Catalyzes the transformation of S-ribosylhomocysteine (RHC) to homocysteine (HC) and 4,5-dihydroxy-2,3-pentadione (DPD). This is S-ribosylhomocysteine lyase from Yersinia enterocolitica serotype O:8 / biotype 1B (strain NCTC 13174 / 8081).